Here is a 314-residue protein sequence, read N- to C-terminus: tRNA dimethylallyltransferase (314 aa).

12-19 serves as a coordination point for ATP; the sequence is GPTAGGKS. Position 14–19 (14–19) interacts with substrate; sequence TAGGKS. Positions 37 to 40 are interaction with substrate tRNA; sequence DSMQ.

It belongs to the IPP transferase family. Monomer. Mg(2+) is required as a cofactor.

The enzyme catalyses adenosine(37) in tRNA + dimethylallyl diphosphate = N(6)-dimethylallyladenosine(37) in tRNA + diphosphate. Catalyzes the transfer of a dimethylallyl group onto the adenine at position 37 in tRNAs that read codons beginning with uridine, leading to the formation of N6-(dimethylallyl)adenosine (i(6)A). This chain is tRNA dimethylallyltransferase, found in Rhodospirillum centenum (strain ATCC 51521 / SW).